The chain runs to 228 residues: tRNA (guanine-N(1)-)-methyltransferase (228 aa).

S-adenosyl-L-methionine is bound by residues glycine 111 and 131 to 136; that span reads IGDFIL.

Belongs to the RNA methyltransferase TrmD family. As to quaternary structure, homodimer.

Its subcellular location is the cytoplasm. It carries out the reaction guanosine(37) in tRNA + S-adenosyl-L-methionine = N(1)-methylguanosine(37) in tRNA + S-adenosyl-L-homocysteine + H(+). Its function is as follows. Specifically methylates guanosine-37 in various tRNAs. This Pelagibacter ubique (strain HTCC1062) protein is tRNA (guanine-N(1)-)-methyltransferase.